The following is a 365-amino-acid chain: MGYCDGKWTPVIIMVMINSALGLANALVKKVLDGGVNHMVIATYRLAISTLFLAPIAFFWERKTRPTLTLNILVQLFFSALVGASLTQYFFLLGLSYTSATLACAFISMTPAITFVMALIFRVEKLNMKSKAGMGMVMGALICIGGALLLTMYKGVPLTKLRKLETHQLINNNHAMKPENWIIGCVLLFAGSSCFGSWMLIQAKVNEKYPCQYSSTVVLSFFGTIQCALLSLIKSRDITAWILTDKLDIVTIVYAGAVAQGICTVGTSWCIRKRGPIFTSIFTPVGLIFATLFDFLILHRQIFLGSVVGSGVVIFGLYIFLLGKVRLMKEECEKKLPCRFNEDDQEEDDDEQYKKGHLMVVPMTP.

The next 10 membrane-spanning stretches (helical) occupy residues 8–28, 40–60, 72–92, 101–121, 132–152, 181–201, 213–233, 249–269, 277–297, and 302–322; these read WTPVIIMVMINSALGLANALV, VIATYRLAISTLFLAPIAFFW, ILVQLFFSALVGASLTQYFFL, TLACAFISMTPAITFVMALIF, AGMGMVMGALICIGGALLLTM, WIIGCVLLFAGSSCFGSWMLI, YSSTVVLSFFGTIQCALLSLI, IVTIVYAGAVAQGICTVGTSW, IFTSIFTPVGLIFATLFDFLI, and IFLGSVVGSGVVIFGLYIFLL. 2 consecutive EamA domains span residues 25-144 and 196-321; these read NALV…LICI and GSWM…YIFL.

This sequence belongs to the drug/metabolite transporter (DMT) superfamily. Plant drug/metabolite exporter (P-DME) (TC 2.A.7.4) family.

The protein localises to the membrane. The chain is WAT1-related protein At4g01440 from Arabidopsis thaliana (Mouse-ear cress).